The sequence spans 619 residues: Chaperone protein HscA homolog (619 aa).

It belongs to the heat shock protein 70 family.

Chaperone involved in the maturation of iron-sulfur cluster-containing proteins. Has a low intrinsic ATPase activity which is markedly stimulated by HscB. This Methylococcus capsulatus (strain ATCC 33009 / NCIMB 11132 / Bath) protein is Chaperone protein HscA homolog.